Reading from the N-terminus, the 506-residue chain is Maturase K (506 aa).

Belongs to the intron maturase 2 family. MatK subfamily.

It is found in the plastid. Its subcellular location is the chloroplast. Usually encoded in the trnK tRNA gene intron. Probably assists in splicing its own and other chloroplast group II introns. This Trifolium subterraneum (Subterranean clover) protein is Maturase K.